The following is a 120-amino-acid chain: MFITSLKNQKEFELINKLGKKFHEKYFILVIAKNIPKIFLESKYNIFLGIKVSKKLNKKAVVRNKIKRRIKHLIRLICNNSNLKKLAMIIIPRKGFDTADFSVLNHELSKAILDFYNPKK.

It belongs to the RnpA family. As to quaternary structure, consists of a catalytic RNA component (M1 or rnpB) and a protein subunit.

The enzyme catalyses Endonucleolytic cleavage of RNA, removing 5'-extranucleotides from tRNA precursor.. Its function is as follows. RNaseP catalyzes the removal of the 5'-leader sequence from pre-tRNA to produce the mature 5'-terminus. It can also cleave other RNA substrates such as 4.5S RNA. The protein component plays an auxiliary but essential role in vivo by binding to the 5'-leader sequence and broadening the substrate specificity of the ribozyme. The sequence is that of Ribonuclease P protein component from Rickettsia bellii (strain RML369-C).